Here is a 318-residue protein sequence, read N- to C-terminus: Protoheme IX farnesyltransferase (318 aa).

The next 9 helical transmembrane spans lie at 37-57 (LVIF…HPVI), 58-78 (AFTA…LNMW), 100-120 (VTAR…VMTM), 122-142 (VLVN…YLVV), 155-175 (IVIG…AVTG), 182-202 (FVLF…LALY), 228-248 (IMLY…LGFA), 251-271 (LYMG…FGIW), and 291-311 (ILYL…GLGG).

It belongs to the UbiA prenyltransferase family. Protoheme IX farnesyltransferase subfamily.

Its subcellular location is the cell inner membrane. The catalysed reaction is heme b + (2E,6E)-farnesyl diphosphate + H2O = Fe(II)-heme o + diphosphate. The protein operates within porphyrin-containing compound metabolism; heme O biosynthesis; heme O from protoheme: step 1/1. Its function is as follows. Converts heme B (protoheme IX) to heme O by substitution of the vinyl group on carbon 2 of heme B porphyrin ring with a hydroxyethyl farnesyl side group. The sequence is that of Protoheme IX farnesyltransferase from Parvibaculum lavamentivorans (strain DS-1 / DSM 13023 / NCIMB 13966).